The primary structure comprises 509 residues: DEAD-box ATP-dependent RNA helicase CshA (509 aa).

The Q motif motif lies at 2 to 30 (QNFKELGISDKTVQTLEAMGFKEPTPIQK). Positions 33–203 (IPYALEGDDI…QQFMKAPKII (171 aa)) constitute a Helicase ATP-binding domain. An ATP-binding site is contributed by 46–53 (AQTGTGKT). A DEAD box motif is present at residues 150–153 (DEAD). The 162-residue stretch at 214–375 (QIDEYYTIVK…LRPPHRKEVL (162 aa)) folds into the Helicase C-terminal domain. 2 stretches are compositionally biased toward basic residues: residues 440–459 (ARKN…KRGN) and 467–482 (RRSK…KKNQ). The interval 440 to 509 (ARKNRSSKGG…KGRTFADHQK (70 aa)) is disordered. Basic and acidic residues predominate over residues 483 to 492 (KKFDRRDKQQ).

This sequence belongs to the DEAD box helicase family. CshA subfamily. As to quaternary structure, oligomerizes, may be a member of the RNA degradosome.

It localises to the cytoplasm. It carries out the reaction ATP + H2O = ADP + phosphate + H(+). Functionally, DEAD-box RNA helicase possibly involved in RNA degradation. Unwinds dsRNA in both 5'- and 3'-directions, has RNA-dependent ATPase activity. The polypeptide is DEAD-box ATP-dependent RNA helicase CshA (Staphylococcus epidermidis (strain ATCC 12228 / FDA PCI 1200)).